Reading from the N-terminus, the 382-residue chain is Homoserine O-succinyltransferase (382 aa).

Positions 51 to 359 constitute an AB hydrolase-1 domain; the sequence is NAVLICHALS…DAPWGHDAFL (309 aa). The active-site Nucleophile is Ser157. Arg227 contacts substrate. Active-site residues include Asp322 and His355. Asp356 contacts substrate.

This sequence belongs to the AB hydrolase superfamily. MetX family. As to quaternary structure, homodimer.

The protein resides in the cytoplasm. It carries out the reaction L-homoserine + succinyl-CoA = O-succinyl-L-homoserine + CoA. Its pathway is amino-acid biosynthesis; L-methionine biosynthesis via de novo pathway; O-succinyl-L-homoserine from L-homoserine: step 1/1. Transfers a succinyl group from succinyl-CoA to L-homoserine, forming succinyl-L-homoserine. This chain is Homoserine O-succinyltransferase, found in Marinobacter nauticus (strain ATCC 700491 / DSM 11845 / VT8) (Marinobacter aquaeolei).